The chain runs to 424 residues: Histidine--tRNA ligase (424 aa).

Residues M1 to P22 form a disordered region.

It belongs to the class-II aminoacyl-tRNA synthetase family. In terms of assembly, homodimer.

The protein resides in the cytoplasm. The catalysed reaction is tRNA(His) + L-histidine + ATP = L-histidyl-tRNA(His) + AMP + diphosphate + H(+). This chain is Histidine--tRNA ligase, found in Rubrobacter xylanophilus (strain DSM 9941 / JCM 11954 / NBRC 16129 / PRD-1).